A 107-amino-acid chain; its full sequence is N(4)-acetylcytidine amidohydrolase (107 aa).

Residues 6-102 enclose the ASCH domain; that stretch reads TFYRRFQADI…RLYVISFSLV (97 aa). Catalysis depends on K20, which acts as the Proton acceptor. T23 acts as the Nucleophile in catalysis. E73 functions as the Proton donor in the catalytic mechanism.

It belongs to the N(4)-acetylcytidine amidohydrolase family.

The enzyme catalyses N(4)-acetylcytidine + H2O = cytidine + acetate + H(+). It carries out the reaction N(4)-acetyl-2'-deoxycytidine + H2O = 2'-deoxycytidine + acetate + H(+). The catalysed reaction is N(4)-acetylcytosine + H2O = cytosine + acetate + H(+). Functionally, catalyzes the hydrolysis of N(4)-acetylcytidine (ac4C). This is N(4)-acetylcytidine amidohydrolase from Edwardsiella ictaluri (strain 93-146).